A 470-amino-acid chain; its full sequence is Neuraminidase (470 aa).

The Intravirion segment spans residues 1–14; sequence MNPNQKIITIGSIS. An involved in apical transport and lipid raft association region spans residues 11–32; that stretch reads GSISLGLVVFNVLLHVVSIIVT. Residues 15–35 form a helical membrane-spanning segment; sequence LGLVVFNVLLHVVSIIVTVLI. Residues 32-86 are hypervariable stalk region; that stretch reads TVLILGKGENNGICNGTVVREYNETVRIERVTQWHNTNVVEYVPYWNGGTYMNNT. At 36 to 470 the chain is on the virion surface side; the sequence is LGKGENNGIC…AILPFDIDKM (435 aa). N46, N54, and N84 each carry an N-linked (GlcNAc...) asparagine; by host glycan. The tract at residues 89–470 is head of neuraminidase; the sequence is ICDVKGFAPF…AILPFDIDKM (382 aa). Intrachain disulfides connect C90–C417, C122–C127, C182–C229, C231–C236, C277–C290, C279–C288, C316–C335, and C421–C446. Position 116 (R116) interacts with substrate. N144 carries N-linked (GlcNAc...) asparagine; by host glycosylation. The active-site Proton donor/acceptor is the D149. R150 serves as a coordination point for substrate. 275 to 276 provides a ligand contact to substrate; that stretch reads EE. R291 is a binding site for substrate. D292 lines the Ca(2+) pocket. N293 carries an N-linked (GlcNAc...) asparagine; by host glycan. Ca(2+) is bound by residues G296 and D322. R368 is a binding site for substrate. N398 carries an N-linked (GlcNAc...) asparagine; by host glycan. The active-site Nucleophile is the Y402.

This sequence belongs to the glycosyl hydrolase 34 family. In terms of assembly, homotetramer. Ca(2+) is required as a cofactor. N-glycosylated.

Its subcellular location is the virion membrane. It is found in the host apical cell membrane. The enzyme catalyses Hydrolysis of alpha-(2-&gt;3)-, alpha-(2-&gt;6)-, alpha-(2-&gt;8)- glycosidic linkages of terminal sialic acid residues in oligosaccharides, glycoproteins, glycolipids, colominic acid and synthetic substrates.. With respect to regulation, inhibited by the neuraminidase inhibitors zanamivir (Relenza) and oseltamivir (Tamiflu). These drugs interfere with the release of progeny virus from infected cells and are effective against all influenza strains. Resistance to neuraminidase inhibitors is quite rare. Its function is as follows. Catalyzes the removal of terminal sialic acid residues from viral and cellular glycoconjugates. Cleaves off the terminal sialic acids on the glycosylated HA during virus budding to facilitate virus release. Additionally helps virus spread through the circulation by further removing sialic acids from the cell surface. These cleavages prevent self-aggregation and ensure the efficient spread of the progeny virus from cell to cell. Otherwise, infection would be limited to one round of replication. Described as a receptor-destroying enzyme because it cleaves a terminal sialic acid from the cellular receptors. May facilitate viral invasion of the upper airways by cleaving the sialic acid moieties on the mucin of the airway epithelial cells. Likely to plays a role in the budding process through its association with lipid rafts during intracellular transport. May additionally display a raft-association independent effect on budding. Plays a role in the determination of host range restriction on replication and virulence. Sialidase activity in late endosome/lysosome traffic seems to enhance virus replication. In Influenza A virus (strain A/Turkey/Ireland/1378/1983 H5N8), this protein is Neuraminidase.